Reading from the N-terminus, the 495-residue chain is Glutamyl-tRNA(Gln) amidotransferase subunit A (495 aa).

Residues Lys78 and Ser158 each act as charge relay system in the active site. The Acyl-ester intermediate role is filled by Ser182.

Belongs to the amidase family. GatA subfamily. Heterotrimer of A, B and C subunits.

The catalysed reaction is L-glutamyl-tRNA(Gln) + L-glutamine + ATP + H2O = L-glutaminyl-tRNA(Gln) + L-glutamate + ADP + phosphate + H(+). Functionally, allows the formation of correctly charged Gln-tRNA(Gln) through the transamidation of misacylated Glu-tRNA(Gln) in organisms which lack glutaminyl-tRNA synthetase. The reaction takes place in the presence of glutamine and ATP through an activated gamma-phospho-Glu-tRNA(Gln). The sequence is that of Glutamyl-tRNA(Gln) amidotransferase subunit A from Dinoroseobacter shibae (strain DSM 16493 / NCIMB 14021 / DFL 12).